We begin with the raw amino-acid sequence, 20 residues long: Alpha-conotoxin-like ts14a (20 aa).

2 disulfides stabilise this stretch: Cys3–Cys16 and Cys14–Cys20.

In terms of tissue distribution, expressed by the venom duct.

The protein resides in the secreted. Alpha-conotoxins act on postsynaptic membranes, they bind to the nicotinic acetylcholine receptors (nAChR) and thus inhibit them. The polypeptide is Alpha-conotoxin-like ts14a (Conus tessulatus (Tessellate cone)).